Here is a 44-residue protein sequence, read N- to C-terminus: Protein PsbN (44 aa).

The helical transmembrane segment at 6-26 (FFFSLFVWCLLLSITAYSLYV) threads the bilayer.

It belongs to the PsbN family.

Its subcellular location is the plastid. It localises to the chloroplast thylakoid membrane. In terms of biological role, may play a role in photosystem I and II biogenesis. This Tupiella akineta (Green alga) protein is Protein PsbN.